We begin with the raw amino-acid sequence, 204 residues long: Somatotropin (204 aa).

The signal sequence occupies residues 1–17; sequence MDRVVLMLSVLSLGVSS. Position 18 is a pyrrolidone carboxylic acid (glutamine 18). Zn(2+) is bound at residue histidine 36. Cysteine 69 and cysteine 177 are joined by a disulfide. Glutamate 186 contacts Zn(2+). A disulfide bridge links cysteine 194 with cysteine 202.

Belongs to the somatotropin/prolactin family.

It localises to the secreted. Growth hormone plays an important role in growth control and is involved in the regulation of several anabolic processes. Implicated as an osmoregulatory substance important for seawater adaptation. The sequence is that of Somatotropin (gh) from Acanthopagrus latus (Yellowfin seabream).